The primary structure comprises 239 residues: Transcriptional regulatory protein BtsR (239 aa).

Residues 3-116 form the Response regulatory domain; that stretch reads KVLIVDDEPL…RLEKTLHRLR (114 aa). Asp54 is modified (4-aspartylphosphate). An HTH LytTR-type domain is found at 137–239; the sequence is IPCTGHSRIY…LKSLKEAIGL (103 aa).

In terms of processing, phosphorylated by BtsS.

Functionally, member of the two-component regulatory system BtsS/BtsR. BtsR regulates expression of btsT by binding to its promoter region. This Salmonella typhimurium (strain LT2 / SGSC1412 / ATCC 700720) protein is Transcriptional regulatory protein BtsR.